Here is a 115-residue protein sequence, read N- to C-terminus: MPMFIVNTNVPRASVPDGFLSELTQQLAQATGKPPQYIAVHVVPDQLMAFGGSSEPCALCSLHSIGKIGGAQNRSYSKLLCGLLAERLRISPDRVYINYYDMNAANVGWNNSTFA.

Pro-2 (proton acceptor; via imino nitrogen) is an active-site residue. Residues Lys-33 and Ile-65 each coordinate substrate. At Lys-78 the chain carries N6-acetyllysine; alternate. Position 78 is an N6-succinyllysine; alternate (Lys-78). Residue Asn-98 coordinates substrate.

The protein belongs to the MIF family. As to quaternary structure, homotrimer. Interacts with CXCR2 extracellular domain. Interacts with the CD74 extracellular domain, USO1, COPS5 and BNIPL.

It is found in the secreted. Its subcellular location is the cytoplasm. It carries out the reaction 3-phenylpyruvate = enol-phenylpyruvate. It catalyses the reaction L-dopachrome = 5,6-dihydroxyindole-2-carboxylate. Its function is as follows. Pro-inflammatory cytokine involved in the innate immune response to bacterial pathogens. The expression of MIF at sites of inflammation suggests a role as mediator in regulating the function of macrophages in host defense. Counteracts the anti-inflammatory activity of glucocorticoids. Has phenylpyruvate tautomerase and dopachrome tautomerase activity (in vitro), but the physiological substrate is not known. It is not clear whether the tautomerase activity has any physiological relevance, and whether it is important for cytokine activity. The chain is Macrophage migration inhibitory factor from Homo sapiens (Human).